Consider the following 236-residue polypeptide: HTH-type transcriptional regulator SACE_5812 (236 aa).

The HTH tetR-type domain occupies 30-90 (LLTQDKIVSA…LALDAVFGEV (61 aa)). Positions 53-72 (SMRKLADRLQAHATSLYWHV) form a DNA-binding region, H-T-H motif.

In terms of biological role, transcriptional regulator that inhibits erythromycin production. Directly represses the expression of SACE_5813, eryAI (encoding polyketide synthase I) and ermE (encoding rRNA methyltransferase), suggesting its direct regulation of the erythromycin biosynthesis gene cluster. May play an important role in regulating secondary metabolism in actinomycetes. This Saccharopolyspora erythraea (strain ATCC 11635 / DSM 40517 / JCM 4748 / NBRC 13426 / NCIMB 8594 / NRRL 2338) protein is HTH-type transcriptional regulator SACE_5812.